Reading from the N-terminus, the 193-residue chain is Mesogenin-1 (193 aa).

The tract at residues 34 to 59 (GPFELNQASPSQSLSPAPSLESYSSS) is disordered. The span at 40 to 59 (QASPSQSLSPAPSLESYSSS) shows a compositional bias: low complexity. Residues 124–178 (QRRRKASEREKLRMRTLADALHTLRNYLPPVYSQRGQPLTKIQTLKYTIKYIGEL) enclose the bHLH domain.

Its subcellular location is the nucleus. Functionally, involved in specifying the paraxial, but not dorsal, mesoderm. May regulate the expression of T-box transcription factors required for mesoderm formation and differentiation. The chain is Mesogenin-1 (MSGN1) from Homo sapiens (Human).